Consider the following 386-residue polypeptide: Mannitol-1-phosphate 5-dehydrogenase (386 aa).

An NAD(+)-binding site is contributed by 4-15 (AIHFGGGNIGRG). Residue K211 is part of the active site.

Belongs to the mannitol dehydrogenase family. As to quaternary structure, monomer.

The catalysed reaction is D-mannitol 1-phosphate + NAD(+) = beta-D-fructose 6-phosphate + NADH + H(+). In terms of biological role, catalyzes the NAD(H)-dependent interconversion of D-fructose 6-phosphate and D-mannitol 1-phosphate in the mannitol metabolic pathway. This chain is Mannitol-1-phosphate 5-dehydrogenase (mpdA), found in Emericella nidulans (strain FGSC A4 / ATCC 38163 / CBS 112.46 / NRRL 194 / M139) (Aspergillus nidulans).